A 120-amino-acid chain; its full sequence is Seripauperin-8 (120 aa).

The signal sequence occupies residues methionine 1 to alanine 20.

Belongs to the SRP1/TIP1 family. Seripauperin subfamily.

This is Seripauperin-8 (PAU8) from Saccharomyces cerevisiae (strain ATCC 204508 / S288c) (Baker's yeast).